Here is an 898-residue protein sequence, read N- to C-terminus: Protein argonaute 1 (898 aa).

Positions 1-52 (MLALNAGSQYPGRGRGRGRGDGGNRVHKHDGINRYHGGFRGGRGGGGGGFRD) are disordered. Residues 18 to 33 (GRGDGGNRVHKHDGIN) show a composition bias toward basic and acidic residues. Gly residues predominate over residues 38–50 (GFRGGRGGGGGGF). The PAZ domain maps to 283–378 (KCSDEMRRLR…IFADRTKMSR (96 aa)). Positions 542 to 883 (FAMVKLRTKE…YARKYGSLKS (342 aa)) constitute a Piwi domain.

Belongs to the argonaute family.

It localises to the cytoplasm. In terms of biological role, involved in RNA-mediated gene silencing (RNAi) of mobile elements and repeats including retroposons SLACS (Spliced Leader Associated Conserved Sequence), TATE (Telomere-Associated Transposable Element) and TAS-like sequences (Telomere Associated Sequence), and a family of 74-nucleotide long tandem repeats, CIR74. Predominantly binds to siRNAs derived from SLACS and TATE transposable elements and to a lesser extent to siRNAs from TAS-like and CIR74 elements. This Leishmania braziliensis protein is Protein argonaute 1.